The sequence spans 20 residues: Snaclec ophioluxin subunit alpha (20 aa).

Cysteines 4 and 15 form a disulfide. One can recognise a C-type lectin domain in the interval 11 to 20 (YDQHCYRIIN).

Belongs to the snaclec family. In terms of assembly, heterodimer of subunits alpha and beta; disulfide-linked. Expressed by the venom gland.

It is found in the secreted. Functionally, binds to the platelet and collagen receptor glycoprotein VI (GP6) and activates platelet aggregation. This Ophiophagus hannah (King cobra) protein is Snaclec ophioluxin subunit alpha.